The chain runs to 242 residues: 4-hydroxy-tetrahydrodipicolinate reductase (242 aa).

Residues 8 to 13 (GSNGRM), 75 to 77 (GTT), and 99 to 102 (ATNM) each bind NAD(+). The Proton donor/acceptor role is filled by His-131. A (S)-2,3,4,5-tetrahydrodipicolinate-binding site is contributed by His-132. Catalysis depends on Lys-135, which acts as the Proton donor. 141–142 (GT) serves as a coordination point for (S)-2,3,4,5-tetrahydrodipicolinate.

Belongs to the DapB family.

The protein localises to the cytoplasm. It carries out the reaction (S)-2,3,4,5-tetrahydrodipicolinate + NAD(+) + H2O = (2S,4S)-4-hydroxy-2,3,4,5-tetrahydrodipicolinate + NADH + H(+). It catalyses the reaction (S)-2,3,4,5-tetrahydrodipicolinate + NADP(+) + H2O = (2S,4S)-4-hydroxy-2,3,4,5-tetrahydrodipicolinate + NADPH + H(+). Its pathway is amino-acid biosynthesis; L-lysine biosynthesis via DAP pathway; (S)-tetrahydrodipicolinate from L-aspartate: step 4/4. Catalyzes the conversion of 4-hydroxy-tetrahydrodipicolinate (HTPA) to tetrahydrodipicolinate. The chain is 4-hydroxy-tetrahydrodipicolinate reductase from Campylobacter lari (strain RM2100 / D67 / ATCC BAA-1060).